The primary structure comprises 382 residues: Mannitol-1-phosphate 5-dehydrogenase (382 aa).

Residue 4–15 (AVHFGAGNIGRG) coordinates NAD(+).

Belongs to the mannitol dehydrogenase family. In terms of assembly, monomer.

It carries out the reaction D-mannitol 1-phosphate + NAD(+) = beta-D-fructose 6-phosphate + NADH + H(+). This chain is Mannitol-1-phosphate 5-dehydrogenase (mtlD), found in Streptococcus mutans serotype c (strain ATCC 700610 / UA159).